Consider the following 180-residue polypeptide: ADP-ribosylation factor 4 (180 aa).

Glycine 2 is lipidated: N-myristoyl glycine. GTP is bound by residues glycine 24–threonine 31, aspartate 67–glutamine 71, and asparagine 126–aspartate 129. A Phosphoserine modification is found at serine 147.

The protein belongs to the small GTPase superfamily. Arf family. Forms a complex containing RAB11A, ASAP1, RAB3IP, RAP11FIP3 and ARF4; the complex promotes preciliary trafficking; the complex binds to RHO in photoreceptor cells and promotes RHO ciliary transport.

It is found in the golgi apparatus. The protein localises to the membrane. GTP-binding protein that functions as an allosteric activator of the cholera toxin catalytic subunit, an ADP-ribosyltransferase. Involved in protein trafficking; may modulate vesicle budding and uncoating within the Golgi apparatus. Part of the ciliary targeting complex containing Rab11, ASAP1, Rabin8/RAB3IP, RAB11FIP3 and ARF4, which direct preciliary vesicle trafficking to mother centriole and ciliogenesis initiation. This Homo sapiens (Human) protein is ADP-ribosylation factor 4 (ARF4).